The following is a 296-amino-acid chain: 33 kDa chaperonin (296 aa).

Cystine bridges form between cysteine 238–cysteine 240 and cysteine 271–cysteine 274.

Belongs to the HSP33 family. Post-translationally, under oxidizing conditions two disulfide bonds are formed involving the reactive cysteines. Under reducing conditions zinc is bound to the reactive cysteines and the protein is inactive.

The protein localises to the cytoplasm. Its function is as follows. Redox regulated molecular chaperone. Protects both thermally unfolding and oxidatively damaged proteins from irreversible aggregation. Plays an important role in the bacterial defense system toward oxidative stress. This chain is 33 kDa chaperonin, found in Clostridium botulinum (strain 657 / Type Ba4).